Reading from the N-terminus, the 561-residue chain is Arginine--tRNA ligase (561 aa).

A 'HIGH' region motif is present at residues P123–H133.

It belongs to the class-I aminoacyl-tRNA synthetase family. Monomer.

Its subcellular location is the cytoplasm. The enzyme catalyses tRNA(Arg) + L-arginine + ATP = L-arginyl-tRNA(Arg) + AMP + diphosphate. The chain is Arginine--tRNA ligase (argS) from Chlamydia pneumoniae (Chlamydophila pneumoniae).